Consider the following 77-residue polypeptide: Small ribosomal subunit protein bS21 (77 aa).

Residues 38-52 (KPSEKRAREKAEAIR) show a composition bias toward basic and acidic residues. The tract at residues 38 to 77 (KPSEKRAREKAEAIRRTRKLARKRAQREGIVSNGRTASVR) is disordered. Over residues 53–62 (RTRKLARKRA) the composition is skewed to basic residues.

Belongs to the bacterial ribosomal protein bS21 family.

The sequence is that of Small ribosomal subunit protein bS21 from Bartonella bacilliformis (strain ATCC 35685 / KC583 / Herrer 020/F12,63).